A 294-amino-acid polypeptide reads, in one-letter code: Putative ribose uptake protein RbsU (294 aa).

10 helical membrane passes run 2 to 24, 34 to 56, 63 to 82, 92 to 114, 121 to 140, 150 to 172, 179 to 198, 218 to 235, 242 to 264, and 274 to 293; these read NAVNILIGLMPMIGWGIFPVIVG, ILGTTFGTLILAIVVAIFRGTPI, IFCLISGACWALAQIITFHV, MPITTGFQLVGASLWGVFVLGNW, LIGFTAIALIIIGVYLTAWS, GAVKGILLLLVGELGYLGYSAFP, GFQGFLPQAIGMTIVGIIFG, IFSGFFFAFAALTYLISA, LATGFVLSQTSVIFATIGGIYIL, and IAVMVGLLLVLVAGSVTAFI.

It belongs to the GRP transporter (TC 2.A.7.5) family.

It is found in the cell membrane. Could be involved in the uptake of ribose. In Latilactobacillus sakei subsp. sakei (strain 23K) (Lactobacillus sakei subsp. sakei), this protein is Putative ribose uptake protein RbsU (rbsU).